Consider the following 511-residue polypeptide: N-acetylgalactosamine-6-O-sulfatase (511 aa).

3-oxoalanine (Ser) is present on serine 83.

The protein belongs to the sulfatase family. In terms of processing, the conversion to 3-oxoalanine (also known as C-formylglycine, FGly), of a serine or cysteine residue in prokaryotes and of a cysteine residue in eukaryotes, is critical for catalytic activity.

In terms of biological role, exosulfatase involved in the degradation of the glycosaminoglycans (GAGs) chondroitin sulfate (CS) and dermatan sulfate (DS). Catalyzes the hydrolysis of the 6-sulfate groups of the N-acetyl-D-galactosamine 6-sulfate units. GAG-specific sulfatases play a key role in the persistence of the major human gut symbiont B.thetaiotaomicron in the host gastrointestinal tract. The polypeptide is N-acetylgalactosamine-6-O-sulfatase (Bacteroides thetaiotaomicron (strain ATCC 29148 / DSM 2079 / JCM 5827 / CCUG 10774 / NCTC 10582 / VPI-5482 / E50)).